Reading from the N-terminus, the 404-residue chain is Acetate kinase (404 aa).

Asn-7 provides a ligand contact to Mg(2+). Lys-14 contacts ATP. Residue Arg-95 participates in substrate binding. Asp-152 functions as the Proton donor/acceptor in the catalytic mechanism. Residues 212–216 (HLGNG), 286–288 (DMR), and 334–338 (GIGEN) each bind ATP. A Mg(2+)-binding site is contributed by Glu-388.

Belongs to the acetokinase family. Homodimer. Mg(2+) is required as a cofactor. Mn(2+) serves as cofactor.

It is found in the cytoplasm. The enzyme catalyses acetate + ATP = acetyl phosphate + ADP. The protein operates within metabolic intermediate biosynthesis; acetyl-CoA biosynthesis; acetyl-CoA from acetate: step 1/2. Catalyzes the formation of acetyl phosphate from acetate and ATP. Can also catalyze the reverse reaction. The chain is Acetate kinase from Nitratidesulfovibrio vulgaris (strain DSM 19637 / Miyazaki F) (Desulfovibrio vulgaris).